A 705-amino-acid polypeptide reads, in one-letter code: tRNA 5-methylaminomethyl-2-thiouridine biosynthesis bifunctional protein MnmC (705 aa).

The interval 1-241 is tRNA (mnm(5)s(2)U34)-methyltransferase; the sequence is MTIKTADIQF…KREMLAGIIA (241 aa). Residues 289 to 705 form an FAD-dependent cmnm(5)s(2)U34 oxidoreductase region; sequence IGAGIAGASM…LIRQLIRREV (417 aa).

It in the N-terminal section; belongs to the methyltransferase superfamily. tRNA (mnm(5)s(2)U34)-methyltransferase family. In the C-terminal section; belongs to the DAO family. FAD is required as a cofactor.

It localises to the cytoplasm. It catalyses the reaction 5-aminomethyl-2-thiouridine(34) in tRNA + S-adenosyl-L-methionine = 5-methylaminomethyl-2-thiouridine(34) in tRNA + S-adenosyl-L-homocysteine + H(+). In terms of biological role, catalyzes the last two steps in the biosynthesis of 5-methylaminomethyl-2-thiouridine (mnm(5)s(2)U) at the wobble position (U34) in tRNA. Catalyzes the FAD-dependent demodification of cmnm(5)s(2)U34 to nm(5)s(2)U34, followed by the transfer of a methyl group from S-adenosyl-L-methionine to nm(5)s(2)U34, to form mnm(5)s(2)U34. This chain is tRNA 5-methylaminomethyl-2-thiouridine biosynthesis bifunctional protein MnmC, found in Pseudoalteromonas atlantica (strain T6c / ATCC BAA-1087).